We begin with the raw amino-acid sequence, 94 residues long: Co-chaperonin GroES (94 aa).

It belongs to the GroES chaperonin family. As to quaternary structure, heptamer of 7 subunits arranged in a ring. Interacts with the chaperonin GroEL.

Its subcellular location is the cytoplasm. In terms of biological role, together with the chaperonin GroEL, plays an essential role in assisting protein folding. The GroEL-GroES system forms a nano-cage that allows encapsulation of the non-native substrate proteins and provides a physical environment optimized to promote and accelerate protein folding. GroES binds to the apical surface of the GroEL ring, thereby capping the opening of the GroEL channel. This Clostridium perfringens (strain ATCC 13124 / DSM 756 / JCM 1290 / NCIMB 6125 / NCTC 8237 / Type A) protein is Co-chaperonin GroES.